The primary structure comprises 416 residues: Adenylosuccinate synthetase (416 aa).

GTP-binding positions include 13–19 and 41–43; these read GDEGKGK and GHT. D14 functions as the Proton acceptor in the catalytic mechanism. 2 residues coordinate Mg(2+): D14 and G41. Residues 14–17, 39–42, T126, R140, Q220, T235, and R299 each bind IMP; these read DEGK and NAGH. H42 acts as the Proton donor in catalysis. Residue 295–301 participates in substrate binding; the sequence is TTTGRPR. GTP-binding positions include R301, 327–329, and 405–407; these read KLD and STS.

Belongs to the adenylosuccinate synthetase family. As to quaternary structure, homodimer. Requires Mg(2+) as cofactor.

It localises to the cytoplasm. It carries out the reaction IMP + L-aspartate + GTP = N(6)-(1,2-dicarboxyethyl)-AMP + GDP + phosphate + 2 H(+). It functions in the pathway purine metabolism; AMP biosynthesis via de novo pathway; AMP from IMP: step 1/2. Plays an important role in the de novo pathway of purine nucleotide biosynthesis. Catalyzes the first committed step in the biosynthesis of AMP from IMP. This Sulfurovum sp. (strain NBC37-1) protein is Adenylosuccinate synthetase.